A 359-amino-acid polypeptide reads, in one-letter code: Mitochondrial glutathione transporter SLC25A39 (359 aa).

At 1–18 (MGDRPAVRISAAITPVQQ) the chain is on the mitochondrial intermembrane side. Solcar repeat units lie at residues 13–149 (ITPV…LRDF), 157–241 (HGDH…VKAQ), and 251–346 (ASFT…GKTF). Residues 19-39 (MLASGTGAVLTSLFVTPLDVV) form a helical membrane-spanning segment. Over 40–119 (KIRLQAQQTP…VKITHNEGLR (80 aa)) the chain is Mitochondrial matrix. Positions 72, 76, 86, and 92 each coordinate [2Fe-2S] cluster. The helical transmembrane segment at 120–140 (SLWSGLPPTLVMAVPATVIYF) threads the bilayer. Topologically, residues 141 to 162 (TCYDQLRDFLCYSMGYHGDHIP) are mitochondrial intermembrane. Residues 163-183 (LIAGGLARLGAVSVISPLELV) form a helical membrane-spanning segment. The Mitochondrial matrix segment spans residues 184 to 212 (RTKMQSRRLQYSELMVCIRSSVAQDGWLS). The chain crosses the membrane as a helical span at residues 213–233 (LWRGWGPTVLRDVPFSALYWF). Residues 234-253 (NYELVKAQLCEHYRTPQASF) lie on the Mitochondrial intermembrane side of the membrane. Residues 254-274 (TISFTAGAVSGAIAAVLTLPF) traverse the membrane as a helical segment. The Mitochondrial matrix segment spans residues 275 to 316 (DVVKTRRQIQLGEMEALGAVSMKKPSSTWNMMRNIWIDMGYK). The chain crosses the membrane as a helical span at residues 317–337 (GLFAGFLPRVIKVAPACAVMI). Topologically, residues 338 to 359 (STYEFGKTFFQERNLHQARCGL) are mitochondrial intermembrane.

It belongs to the mitochondrial carrier (TC 2.A.29) family. Cleaved and degraded by AFG3L2; degradation by AFG3L2 is regulated by the ability of SLC25A39 to bind iron-sulfur. In absence of mitochondrial glutathione, SLC25A39 binds iron-sulfur, preventing cleavage and degradation by AFG3L2. The presence of mitochondrial glutathione prevents iron-sulfur-binding to SLC25A39, promoting cleavage and degradation by AFG3L2.

It localises to the mitochondrion inner membrane. The catalysed reaction is glutathione(in) = glutathione(out). Its activity is regulated as follows. The activity of SLC25A39 is regulated by levels of mitochondrial glutathione via its ability to bind [2Fe-2S] iron-sulfur cluster. Upon physiological levels of mitochondrial glutathione, glutathione prevents iron-sulfur-binding to SLC25A39 promoting cleavage and degradation by AFG3L2. Upon depletion of mitochondrial glutathione, SLC25A39 binds iron-sulfur, preventing cleavage and degradation by AFG3L2. Its function is as follows. Mitochondrial transporter required for glutathione import into mitochondria. Glutathione, which plays key roles in oxidative metabolism, is produced exclusively in the cytosol and is imported in many organelles. Mitochondrial glutathione is required for the activity and stability of proteins containing iron-sulfur clusters, as well as erythropoiesis. Involved in the early steps of heme biosynthesis. This chain is Mitochondrial glutathione transporter SLC25A39 (slc25a39), found in Danio rerio (Zebrafish).